Reading from the N-terminus, the 496-residue chain is Nectin 1a (496 aa).

An N-terminal signal peptide occupies residues 1–20 (MMFINLLLRLMCVFLIGADG). Topologically, residues 21–349 (QMVQMESSKA…FQDQQQAGVV (329 aa)) are extracellular. Residues 34 to 138 (GSQVELPCQF…GNRENMVNLT (105 aa)) enclose the Ig-like V-type domain. Cys41 and Cys121 form a disulfide bridge. N-linked (GlcNAc...) asparagine glycans are attached at residues Asn62 and Asn136. Ig-like C2-type domains follow at residues 143 to 238 (PMIQ…VTLN) and 243 to 330 (PEVI…VIVT). 2 cysteine pairs are disulfide-bonded: Cys168-Cys222 and Cys265-Cys312. N-linked (GlcNAc...) asparagine glycosylation is present at Asn282. Residues 350-370 (IGGAVVCGTVLLAAVTLLVVF) traverse the membrane as a helical segment. Over 371-496 (LYRRRCMFKG…SVISKEEWYV (126 aa)) the chain is Cytoplasmic.

Belongs to the nectin family. In terms of assembly, cis- and trans-homodimer. Can form trans-heterodimers. In terms of tissue distribution, expressed in the developing eye and nervous system.

Its subcellular location is the cell membrane. It is found in the cell junction. The protein localises to the adherens junction. Cell adhesion molecule that promotes cell-cell contacts and plays important roles in the development of the nervous system. Acts by forming homophilic or heterophilic trans-dimers. This is Nectin 1a from Danio rerio (Zebrafish).